We begin with the raw amino-acid sequence, 224 residues long: Peroxiredoxin-6 (224 aa).

A Thioredoxin domain is found at 4–168; sequence LLLGDEAPNF…ILRVVDSLQL (165 aa). Residues 30–39 form a required and sufficient for targeting to lysosomes and lamellar bodies region; the sequence is DSWGILFSHP. The active-site Cysteine sulfenic acid (-SOH) intermediate; for peroxidase activity is C46. Y88 is subject to Phosphotyrosine. The active-site For phospholipase activity is the D139. The residue at position 176 (T176) is a Phosphothreonine; by MAPK.

It belongs to the peroxiredoxin family. Prx6 subfamily. In terms of assembly, homodimer. Interacts with GSTP1; mediates PRDX6 glutathionylation and regeneration. In terms of processing, irreversibly inactivated by overoxidation of Cys-46 to sulfinic acid (Cys-SO(2)H) and sulfonic acid (Cys-SO(3)H) forms upon oxidative stress. Post-translationally, phosphorylation at Thr-176 by MAP kinases increases the phospholipase activity of the enzyme. The phosphorylated form exhibits a greater lysophosphatidylcholine acyltransferase activity compared to the non-phosphorylated form.

Its subcellular location is the cytoplasm. It localises to the lysosome. The catalysed reaction is a hydroperoxide + 2 glutathione = an alcohol + glutathione disulfide + H2O. The enzyme catalyses a 1,2-diacyl-sn-glycero-3-phosphocholine + H2O = a 1-acyl-sn-glycero-3-phosphocholine + a fatty acid + H(+). It catalyses the reaction a 1-acyl-sn-glycero-3-phosphocholine + an acyl-CoA = a 1,2-diacyl-sn-glycero-3-phosphocholine + CoA. It carries out the reaction 1-hexadecanoyl-sn-glycero-3-phosphocholine + hexadecanoyl-CoA = 1,2-dihexadecanoyl-sn-glycero-3-phosphocholine + CoA. The catalysed reaction is 1,2-dihexadecanoyl-sn-glycero-3-phosphocholine + H2O = 1-hexadecanoyl-sn-glycero-3-phosphocholine + hexadecanoate + H(+). In terms of biological role, thiol-specific peroxidase that catalyzes the reduction of hydrogen peroxide and organic hydroperoxides to water and alcohols, respectively. Can reduce H(2)O(2) and short chain organic, fatty acid, and phospholipid hydroperoxides. Also has phospholipase activity, and can therefore either reduce the oxidized sn-2 fatty acyl group of phospholipids (peroxidase activity) or hydrolyze the sn-2 ester bond of phospholipids (phospholipase activity). These activities are dependent on binding to phospholipids at acidic pH and to oxidized phospholipds at cytosolic pH. Plays a role in cell protection against oxidative stress by detoxifying peroxides and in phospholipid homeostasis. Exhibits acyl-CoA-dependent lysophospholipid acyltransferase which mediates the conversion of lysophosphatidylcholine (1-acyl-sn-glycero-3-phosphocholine or LPC) into phosphatidylcholine (1,2-diacyl-sn-glycero-3-phosphocholine or PC). Shows a clear preference for LPC as the lysophospholipid and for palmitoyl CoA as the fatty acyl substrate. This Gallus gallus (Chicken) protein is Peroxiredoxin-6 (PRDX6).